We begin with the raw amino-acid sequence, 607 residues long: NADH-ubiquinone oxidoreductase chain 5 (607 aa).

Helical transmembrane passes span 3 to 23 (IFTT…LISM), 35 to 55 (YTTT…LMFF), 84 to 104 (FFSI…MQFS), 117 to 137 (FIKY…ANNM), 140 to 160 (LFIG…WWYG), 171 to 191 (AILY…WFSL), 210 to 230 (LIPL…FGLH), 241 to 261 (TPVS…FLLV), 272 to 292 (FILT…AICA), 301 to 320 (IIAF…LGMN), 324 to 344 (LAFL…MCSG), 365 to 385 (IMPF…GMPF), 405 to 427 (NAWA…MRII), 457 to 477 (LAFG…PTSI), 482 to 502 (MPWF…LIAL), and 586 to 606 (LYFM…SINL).

Belongs to the complex I subunit 5 family. In terms of assembly, core subunit of respiratory chain NADH dehydrogenase (Complex I) which is composed of 45 different subunits.

The protein localises to the mitochondrion inner membrane. It catalyses the reaction a ubiquinone + NADH + 5 H(+)(in) = a ubiquinol + NAD(+) + 4 H(+)(out). Functionally, core subunit of the mitochondrial membrane respiratory chain NADH dehydrogenase (Complex I) which catalyzes electron transfer from NADH through the respiratory chain, using ubiquinone as an electron acceptor. Essential for the catalytic activity and assembly of complex I. In Mus musculus (Mouse), this protein is NADH-ubiquinone oxidoreductase chain 5 (Mtnd5).